A 234-amino-acid chain; its full sequence is GTP cyclohydrolase 1 type 2 homolog (234 aa).

A divalent metal cation-binding residues include histidine 61, histidine 62, aspartate 80, histidine 195, and glutamate 199.

Belongs to the GTP cyclohydrolase I type 2/NIF3 family. Homohexamer.

This is GTP cyclohydrolase 1 type 2 homolog from Methanothermobacter thermautotrophicus (strain ATCC 29096 / DSM 1053 / JCM 10044 / NBRC 100330 / Delta H) (Methanobacterium thermoautotrophicum).